A 311-amino-acid polypeptide reads, in one-letter code: Protein translocase subunit SecF (311 aa).

A run of 6 helical transmembrane segments spans residues V23–Y42, I140–V160, W164–F184, L194–I214, I246–A266, and V272–I292.

This sequence belongs to the SecD/SecF family. SecF subfamily. Forms a complex with SecD. Part of the essential Sec protein translocation apparatus which comprises SecA, SecYEG and auxiliary proteins SecDF-YajC and YidC.

It is found in the cell inner membrane. Functionally, part of the Sec protein translocase complex. Interacts with the SecYEG preprotein conducting channel. SecDF uses the proton motive force (PMF) to complete protein translocation after the ATP-dependent function of SecA. This chain is Protein translocase subunit SecF, found in Rickettsia prowazekii (strain Madrid E).